The chain runs to 392 residues: Succinate--CoA ligase [ADP-forming] subunit beta (392 aa).

The 240-residue stretch at 9 to 248 (KGLFRDYGVS…LHEEDPTEVK (240 aa)) folds into the ATP-grasp domain. Residues K50, 57–59 (GRG), V106, and E111 contribute to the ATP site. Mg(2+) contacts are provided by N203 and D217. Substrate contacts are provided by residues N268 and 325–327 (GIV).

Belongs to the succinate/malate CoA ligase beta subunit family. As to quaternary structure, heterotetramer of two alpha and two beta subunits. The cofactor is Mg(2+).

The enzyme catalyses succinate + ATP + CoA = succinyl-CoA + ADP + phosphate. It carries out the reaction GTP + succinate + CoA = succinyl-CoA + GDP + phosphate. It participates in carbohydrate metabolism; tricarboxylic acid cycle; succinate from succinyl-CoA (ligase route): step 1/1. In terms of biological role, succinyl-CoA synthetase functions in the citric acid cycle (TCA), coupling the hydrolysis of succinyl-CoA to the synthesis of either ATP or GTP and thus represents the only step of substrate-level phosphorylation in the TCA. The beta subunit provides nucleotide specificity of the enzyme and binds the substrate succinate, while the binding sites for coenzyme A and phosphate are found in the alpha subunit. The protein is Succinate--CoA ligase [ADP-forming] subunit beta of Salinibacter ruber (strain DSM 13855 / M31).